We begin with the raw amino-acid sequence, 156 residues long: Endoribonuclease YbeY (156 aa).

3 residues coordinate Zn(2+): His-122, His-126, and His-132.

Belongs to the endoribonuclease YbeY family. Zn(2+) is required as a cofactor.

Its subcellular location is the cytoplasm. Functionally, single strand-specific metallo-endoribonuclease involved in late-stage 70S ribosome quality control and in maturation of the 3' terminus of the 16S rRNA. The polypeptide is Endoribonuclease YbeY (Bacillus mycoides (strain KBAB4) (Bacillus weihenstephanensis)).